Consider the following 901-residue polypeptide: Core protein VP3 (901 aa).

Belongs to the orbivirus VP3 family.

The protein resides in the virion. Its function is as follows. The VP3 protein is one of the five proteins (with VP1, VP4, VP6 and VP7) which form the inner capsid of the virus. This chain is Core protein VP3 (Segment-3), found in Antilocapra americana (Pronghorn).